Here is a 529-residue protein sequence, read N- to C-terminus: Membrane-bound lytic murein transglycosylase F (529 aa).

An N-terminal signal peptide occupies residues 1-27 (MPIFNLHQLRNFLFIIATTLFLSACQI). The non-LT domain stretch occupies residues 28–287 (ESKPTSELDQ…RLEEKYIGHI (260 aa)). Positions 288 to 529 (GSFDYVDTRA…QATLTTEVQP (242 aa)) are LT domain. Glutamate 332 is a catalytic residue. The disordered stretch occupies residues 510–529 (EALSPDVGVSQATLTTEVQP). Residues 519 to 529 (SQATLTTEVQP) show a composition bias toward polar residues.

This sequence in the N-terminal section; belongs to the bacterial solute-binding protein 3 family. It in the C-terminal section; belongs to the transglycosylase Slt family.

The protein resides in the cell outer membrane. The catalysed reaction is Exolytic cleavage of the (1-&gt;4)-beta-glycosidic linkage between N-acetylmuramic acid (MurNAc) and N-acetylglucosamine (GlcNAc) residues in peptidoglycan, from either the reducing or the non-reducing ends of the peptidoglycan chains, with concomitant formation of a 1,6-anhydrobond in the MurNAc residue.. Its function is as follows. Murein-degrading enzyme that degrades murein glycan strands and insoluble, high-molecular weight murein sacculi, with the concomitant formation of a 1,6-anhydromuramoyl product. Lytic transglycosylases (LTs) play an integral role in the metabolism of the peptidoglycan (PG) sacculus. Their lytic action creates space within the PG sacculus to allow for its expansion as well as for the insertion of various structures such as secretion systems and flagella. The chain is Membrane-bound lytic murein transglycosylase F from Vibrio vulnificus (strain CMCP6).